The chain runs to 210 residues: SAP domain-containing ribonucleoprotein (210 aa).

A2 carries the N-acetylalanine modification. The SAP domain occupies L8–L42. Position 10 is an N6-acetyllysine (K10). Acidic residues predominate over residues H45–E64. Residues H45–E87 are disordered. Residues P65–E87 show a composition bias toward basic and acidic residues. K142 carries the post-translational modification N6-acetyllysine. The disordered stretch occupies residues V161–A210. S163 is modified (phosphoserine). Over residues V184 to T193 the composition is skewed to polar residues.

It belongs to the SAP domain-containing ribonucleoprotein family. Interacts with DDX39A. Interacts with FUS. Interacts (via the C-terminal domain) with DDX39B; the interaction is direct and facilitates RNA binding of DDX39B. Component of the transcription/export (TREX) complex at least composed of ALYREF/THOC4, DDX39B, SARNP/CIP29, CHTOP and the THO subcomplex; TREX seems to have dynamic structure involving ATP-dependent remodeling; in the complex interacts directly with DDX39B in a ATP-dependent manner which bridges it to ALYREF/THOC4.

It localises to the nucleus. The protein localises to the nucleus speckle. Binds both single-stranded and double-stranded DNA with higher affinity for the single-stranded form. Specifically binds to scaffold/matrix attachment region DNA. Also binds single-stranded RNA. Enhances RNA unwinding activity of DDX39A. May participate in important transcriptional or translational control of cell growth, metabolism and carcinogenesis. Component of the TREX complex which is thought to couple mRNA transcription, processing and nuclear export, and specifically associates with spliced mRNA and not with unspliced pre-mRNA. The TREX complex is recruited to spliced mRNAs by a transcription-independent mechanism, binds to mRNA upstream of the exon-junction complex (EJC) and is recruited in a splicing- and cap-dependent manner to a region near the 5' end of the mRNA where it functions in mRNA export to the cytoplasm via the TAP/NXF1 pathway. Associates with DDX39B, which facilitates RNA binding of DDX39B and likely plays a role in mRNA export. The sequence is that of SAP domain-containing ribonucleoprotein (Sarnp) from Rattus norvegicus (Rat).